We begin with the raw amino-acid sequence, 340 residues long: MVRKGDKKLAKPPTTKAANSQPRRRATQRRRSGRADAPLAKASTITGFGRATNDVHISGMSRIAQAVVPAGTGTDGKIVVDSTIVPELLPRLGHAARIFQRYAVETLEFEIQPMCPANTGGGYVAGFLPDPTDNDHTFDALQATRGAVVAKWWESRTVRPQYTRTLLWTSTGKEQRLTSPGRLVLLCVGSNTDVVNVSVMCRWSVRLSVPSLETPEDTTAPITTQAPLHNDSINNGYTGFRSILLGATQLDLAPANAVFVTDKPLPIDYNLGVGDVDRAVYWHLRKKAGDTQVPAGYFDWGLWDDFNKTFTVGAPYYSDQQPRQILLPAGTLFTRVDSEN.

The interval 1–39 is disordered; it reads MVRKGDKKLAKPPTTKAANSQPRRRATQRRRSGRADAPL. A compositionally biased stretch (basic residues) spans 22-32; it reads PRRRATQRRRS.

It belongs to the peptidase A6 family.

The protein resides in the virion. Functionally, capsid protein alpha self-assembles to form an icosahedral procapsid with a T=3 symmetry, about 30 nm in diameter, and consisting of 60 capsid proteins trimers. The capsid encapsulates the two genomic RNAs. The chain is Capsid protein alpha (alpha) from Striped jack nervous necrosis virus (SjNNV).